The primary structure comprises 466 residues: Alpha-1A adrenergic receptor (466 aa).

Residues Met-1 to Lys-25 are Extracellular-facing. N-linked (GlcNAc...) asparagine glycosylation is found at Asn-7, Asn-13, and Asn-22. The chain crosses the membrane as a helical span at residues Ala-26 to Val-51. The Cytoplasmic portion of the chain corresponds to Ala-52 to Tyr-63. The chain crosses the membrane as a helical span at residues Tyr-64–Leu-89. Topologically, residues Gly-90–Cys-99 are extracellular. A helical membrane pass occupies residues Asn-100–Ile-122. Residues Asp-123–Gly-143 are Cytoplasmic-facing. A helical transmembrane segment spans residues Leu-144–Pro-168. At Ala-169–Glu-181 the chain is on the extracellular side. A helical transmembrane segment spans residues Pro-182–Cys-205. At Arg-206 to Lys-272 the chain is on the cytoplasmic side. The chain crosses the membrane as a helical span at residues Thr-273–Phe-297. Over Phe-298–Pro-304 the chain is Extracellular. The chain crosses the membrane as a helical span at residues Glu-305–Ser-329. Residues Ser-330–Val-466 are Cytoplasmic-facing. The Nuclear localization signal signature appears at Lys-334–Lys-349. A lipid anchor (S-palmitoyl cysteine) is attached at Cys-345.

The protein belongs to the G-protein coupled receptor 1 family. Adrenergic receptor subfamily. ADRA1A sub-subfamily. In terms of assembly, homo- and heterooligomer. Heterooligomerizes with ADRA1B homooligomers in cardiac myocytes. Interacts with CAVIN4. In terms of tissue distribution, abundant in liver, vas deferens, brain, and aorta, but not in heart.

The protein localises to the nucleus membrane. Its subcellular location is the cell membrane. It localises to the cytoplasm. It is found in the membrane. The protein resides in the caveola. Its function is as follows. This alpha-adrenergic receptor mediates its action by association with G proteins that activate a phosphatidylinositol-calcium second messenger system. Its effect is mediated by G(q) and G(11) proteins. Nuclear ADRA1A-ADRA1B heterooligomers regulate phenylephrine (PE)-stimulated ERK signaling in cardiac myocytes. The polypeptide is Alpha-1A adrenergic receptor (ADRA1A) (Oryctolagus cuniculus (Rabbit)).